Consider the following 220-residue polypeptide: Vesicle-associated membrane protein 7 (220 aa).

The Cytoplasmic portion of the chain corresponds to 2 to 188 (AILFAVVARG…ARAMCMKNLK (187 aa)). A Longin domain is found at 7–110 (VVARGTTILA…AMNSEFSSVL (104 aa)). One can recognise a v-SNARE coiled-coil homology domain in the interval 125–185 (QVAETQAQVD…RNLARAMCMK (61 aa)). The helical; Anchor for type IV membrane protein transmembrane segment at 189-209 (LTIIIIIVSIVIIYIIVSAAC) threads the bilayer. Topologically, residues 210 to 220 (GGLAWPSCVQK) are vesicular.

The protein belongs to the synaptobrevin family.

Its subcellular location is the cytoplasmic vesicle. The protein localises to the secretory vesicle membrane. It is found in the golgi apparatus. The protein resides in the trans-Golgi network membrane. It localises to the late endosome membrane. Its subcellular location is the lysosome membrane. The protein localises to the endoplasmic reticulum membrane. It is found in the phagosome membrane. The protein resides in the synapse. It localises to the synaptosome. Its function is as follows. Involved in the targeting and/or fusion of transport vesicles to their target membrane during transport of proteins from the early endosome to the lysosome. Required for heterotypic fusion of late endosomes with lysosomes and homotypic lysosomal fusion. Required for calcium regulated lysosomal exocytosis. Involved in the export of chylomicrons from the endoplasmic reticulum to the cis Golgi. Required for focal exocytosis of late endocytic vesicles during phagosome formation. This chain is Vesicle-associated membrane protein 7, found in Gallus gallus (Chicken).